The sequence spans 458 residues: RuvB-like helicase 1 (458 aa).

Basic and acidic residues predominate over residues 1–18 (MVQITEVKENQSSRESRT). The tract at residues 1 to 20 (MVQITEVKENQSSRESRTAA) is disordered. 73–80 (GPPATGKT) lines the ATP pocket.

This sequence belongs to the RuvB family. In terms of assembly, may form heterododecamers with RVB2. Component of the SWR1 chromatin remodeling complex, the INO80 chromatin remodeling complex, and of the R2TP complex.

The protein resides in the nucleus. The enzyme catalyses ATP + H2O = ADP + phosphate + H(+). Its function is as follows. DNA helicase which participates in several chromatin remodeling complexes, including the SWR1 and the INO80 complexes. The SWR1 complex mediates the ATP-dependent exchange of histone H2A for the H2A variant HZT1 leading to transcriptional regulation of selected genes by chromatin remodeling. The INO80 complex remodels chromatin by shifting nucleosomes and is involved in DNA repair. Also involved in pre-rRNA processing. In Candida albicans (strain SC5314 / ATCC MYA-2876) (Yeast), this protein is RuvB-like helicase 1 (RVB1).